The following is a 295-amino-acid chain: Nucleotide-binding protein BLi03725/BL03417 (295 aa).

Residue 16–23 (GMSGAGKT) participates in ATP binding. Residue 67 to 70 (DLRG) participates in GTP binding.

It belongs to the RapZ-like family.

Functionally, displays ATPase and GTPase activities. This is Nucleotide-binding protein BLi03725/BL03417 from Bacillus licheniformis (strain ATCC 14580 / DSM 13 / JCM 2505 / CCUG 7422 / NBRC 12200 / NCIMB 9375 / NCTC 10341 / NRRL NRS-1264 / Gibson 46).